We begin with the raw amino-acid sequence, 390 residues long: MVDFEYSIPTRIFFGKDKINVLGRELKKYGSKVLIVYGGGSIKRNGIYDKAVSILEKNSIKFYELAGVEPNPRVTTVEKGVKICRENGVEVVLAIGGGSAIDCAKVIAAACEYDGNPWDIVLDGSKIKRVLPIASILTIAATGSEMDTWAVINNMDTNEKLIAAHPDMAPKFSILDPTYTYTVPTNQTAAGTADIMSHIFEVYFSNTKTAYLQDRMAEALLRTCIKYGGIALEKPDDYEARANLMWASSLAINGLLTYGKDTNWSVHLMEHELSAYYDITHGVGLAILTPNWMEYILNNDTVYKFVEYGVNVWGIDKEKNHYDIAHQAIQKTRDYFVNVLGLPSRLRDVGIEEEKLDIMAKESVKLTGGTIGNLRPVNASEVLQIFKKSV.

This sequence belongs to the iron-containing alcohol dehydrogenase family. In terms of assembly, homodimer.

The protein operates within alcohol metabolism; butanol biosynthesis. This Clostridium acetobutylicum (strain ATCC 824 / DSM 792 / JCM 1419 / IAM 19013 / LMG 5710 / NBRC 13948 / NRRL B-527 / VKM B-1787 / 2291 / W) protein is NADH-dependent butanol dehydrogenase B (bdhB).